We begin with the raw amino-acid sequence, 52 residues long: ATP synthase protein 8 (52 aa).

Residues Met7–Phe23 traverse the membrane as a helical segment.

It belongs to the ATPase protein 8 family. In terms of assembly, F-type ATPases have 2 components, CF(1) - the catalytic core - and CF(0) - the membrane proton channel.

The protein localises to the mitochondrion membrane. Functionally, mitochondrial membrane ATP synthase (F(1)F(0) ATP synthase or Complex V) produces ATP from ADP in the presence of a proton gradient across the membrane which is generated by electron transport complexes of the respiratory chain. F-type ATPases consist of two structural domains, F(1) - containing the extramembraneous catalytic core and F(0) - containing the membrane proton channel, linked together by a central stalk and a peripheral stalk. During catalysis, ATP synthesis in the catalytic domain of F(1) is coupled via a rotary mechanism of the central stalk subunits to proton translocation. Part of the complex F(0) domain. Minor subunit located with subunit a in the membrane. This chain is ATP synthase protein 8 (MT-ATP8), found in Locusta migratoria (Migratory locust).